Here is a 496-residue protein sequence, read N- to C-terminus: Cytochrome P450 71D181 (496 aa).

A helical; Signal-anchor for type II membrane protein membrane pass occupies residues 1–21 (MDISISWVAIILVISSYFIFM). Cys-435 provides a ligand contact to heme. The disordered stretch occupies residues 471–496 (MSETPGLSGPRKNPLIMVPTIHNPTS).

This sequence belongs to the cytochrome P450 family. It depends on heme as a cofactor. In terms of tissue distribution, expressed at low levels in flowers, leaves and stems.

The protein localises to the membrane. The enzyme catalyses alpha-terpinene + 2 reduced [NADPH--hemoprotein reductase] + 2 O2 = carvacrol + 2 oxidized [NADPH--hemoprotein reductase] + 3 H2O + 2 H(+). It carries out the reaction gamma-terpinene + 2 reduced [NADPH--hemoprotein reductase] + 2 O2 = carvacrol + 2 oxidized [NADPH--hemoprotein reductase] + 3 H2O + 2 H(+). The catalysed reaction is (4S)-limonene + reduced [NADPH--hemoprotein reductase] + O2 = (1S,5R)-carveol + oxidized [NADPH--hemoprotein reductase] + H2O + H(+). It catalyses the reaction (4R)-limonene + reduced [NADPH--hemoprotein reductase] + O2 = (1R,5S)-carveol + oxidized [NADPH--hemoprotein reductase] + H2O + H(+). Its pathway is secondary metabolite biosynthesis; terpenoid biosynthesis. Involved in the biosynthesis of phenolic monoterpenes natural products thymol and carvacrol which have a broad range of biological activities acting as antimicrobial compounds, insecticides, antioxidants and pharmaceutical agents. Catalyzes the C2-hydroxylation of gamma-terpinene and alpha-terpinene to produce carvacrol. Also mediates the C6-hydroxylation of (4S)-limonene and (4R)-limonene to form carveol. The protein is Cytochrome P450 71D181 of Origanum vulgare (Wild marjoram).